We begin with the raw amino-acid sequence, 362 residues long: tRNA-specific 2-thiouridylase MnmA (362 aa).

ATP is bound by residues 6–13 (AMSGGVDS) and Leu-32. Cys-101 acts as the Nucleophile in catalysis. Cys-101 and Cys-197 are disulfide-bonded. Gly-125 provides a ligand contact to ATP. The segment at 147–149 (KDQ) is interaction with tRNA. Catalysis depends on Cys-197, which acts as the Cysteine persulfide intermediate.

Belongs to the MnmA/TRMU family.

It is found in the cytoplasm. The catalysed reaction is S-sulfanyl-L-cysteinyl-[protein] + uridine(34) in tRNA + AH2 + ATP = 2-thiouridine(34) in tRNA + L-cysteinyl-[protein] + A + AMP + diphosphate + H(+). Catalyzes the 2-thiolation of uridine at the wobble position (U34) of tRNA, leading to the formation of s(2)U34. This chain is tRNA-specific 2-thiouridylase MnmA, found in Acidothermus cellulolyticus (strain ATCC 43068 / DSM 8971 / 11B).